Here is a 510-residue protein sequence, read N- to C-terminus: Probable ADP-ribosylation factor-binding protein C1F3.05 (510 aa).

The 137-residue stretch at 14–150 folds into the VHS domain; the sequence is ATDQFNLEPN…LMAFRGYKFP (137 aa). The GAT domain maps to 177 to 301; that stretch reads LEAHKAKLQE…VIEECSNSDL (125 aa). In terms of domain architecture, GAE spans 391-510; the sequence is TNSSLTSILQ…VEQGESHLPL (120 aa).

It localises to the golgi apparatus. Its subcellular location is the trans-Golgi network. Functionally, may play a role in the regulation of membrane traffic through the trans-Golgi network. In Schizosaccharomyces pombe (strain 972 / ATCC 24843) (Fission yeast), this protein is Probable ADP-ribosylation factor-binding protein C1F3.05.